Consider the following 422-residue polypeptide: 5'-deoxyadenosine deaminase (422 aa).

H57 and H59 together coordinate Zn(2+). Residues E86 and H178 each coordinate substrate. H205 lines the Zn(2+) pocket. Residues E208 and D294 each contribute to the substrate site. Residue D294 participates in Zn(2+) binding.

It belongs to the metallo-dependent hydrolases superfamily. MTA/SAH deaminase family. In terms of assembly, homotetramer. It depends on Zn(2+) as a cofactor.

It catalyses the reaction 5'-deoxyadenosine + H2O + H(+) = 5'-deoxyinosine + NH4(+). The enzyme catalyses S-adenosyl-L-homocysteine + H2O + H(+) = S-inosyl-L-homocysteine + NH4(+). The catalysed reaction is S-methyl-5'-thioadenosine + H2O + H(+) = S-methyl-5'-thioinosine + NH4(+). It carries out the reaction adenosine + H2O + H(+) = inosine + NH4(+). It functions in the pathway amino-acid biosynthesis; S-adenosyl-L-methionine biosynthesis. Catalyzes the deamination of three SAM-derived enzymatic products, namely 5'-deoxyadenosine, S-adenosyl-L-homocysteine, and 5'-methylthioadenosine, to produce the inosine analogs. Can also deaminate adenosine. The preferred substrate for this enzyme is 5'-deoxyadenosine, but all these substrates are efficiently deaminated. Likely functions in a S-adenosyl-L-methionine (SAM) recycling pathway from S-adenosyl-L-homocysteine (SAH) produced from SAM-dependent methylation reactions. May also be involved in the recycling of 5'-deoxyadenosine, whereupon the 5'-deoxyribose moiety of 5'-deoxyinosine is further metabolized to deoxyhexoses used for the biosynthesis of aromatic amino acids in methanogens. The polypeptide is 5'-deoxyadenosine deaminase (Methanococcus maripaludis (strain C5 / ATCC BAA-1333)).